The primary structure comprises 1380 residues: Hepatocyte growth factor receptor (1380 aa).

The signal sequence occupies residues 1–24 (MKAPAALAPGILVLLLTLVQKGGG). Residues 25–931 (ECREALAKSE…VIVQPDQNFT (907 aa)) lie on the Extracellular side of the membrane. Residues 27 to 513 (REALAKSEMN…TGKKITKIPL (487 aa)) enclose the Sema domain. Asn45 carries N-linked (GlcNAc...) asparagine glycosylation. Intrachain disulfides connect Cys95/Cys101, Cys98/Cys156, Cys129/Cys137, and Cys170/Cys173. N-linked (GlcNAc...) asparagine glycosylation occurs at Asn200. 2 cysteine pairs are disulfide-bonded: Cys296–Cys361 and Cys383–Cys395. N-linked (GlcNAc...) asparagine glycosylation is found at Asn397 and Asn403. Disulfide bonds link Cys518–Cys536, Cys524–Cys559, Cys527–Cys543, and Cys539–Cys549. A glycan (N-linked (GlcNAc...) asparagine) is linked at Asn551. IPT/TIG domains follow at residues 561 to 654 (PTIY…FSYV), 656 to 738 (PEIT…FSYQ), and 741 to 835 (PLVV…LIYV). Thr580 is a glycosylation site (O-linked (Man) threonine). Residues Asn592, Asn605, and Asn633 are each glycosylated (N-linked (GlcNAc...) asparagine). O-linked (Man) threonine glycans are attached at residues Thr675 and Thr760. 3 N-linked (GlcNAc...) asparagine glycosylation sites follow: Asn784, Asn878, and Asn929. The helical transmembrane segment at 932–954 (GLIVGVVSISVILLSSLGLFLWL) threads the bilayer. Topologically, residues 955–1380 (KKRKQIKDLG…HDTVDGEVDT (426 aa)) are cytoplasmic. Position 965 is a phosphoserine (Ser965). A Phosphothreonine modification is found at Thr976. Ser989, Ser996, and Ser999 each carry phosphoserine. Phosphotyrosine is present on Tyr1002. Residues 1077-1344 (VHFNEVIGRG…RISAIFSTFI (268 aa)) enclose the Protein kinase domain. ATP is bound by residues 1083 to 1091 (IGRGHFGCV) and Lys1109. Asp1203 serves as the catalytic Proton acceptor. The tract at residues 1211–1380 (LDGKFTVKVA…HDTVDGEVDT (170 aa)) is interaction with RANBP9. Tyr1229 bears the Phosphotyrosine mark. A phosphotyrosine; by autocatalysis mark is found at Tyr1233 and Tyr1234. Phosphothreonine is present on Thr1288. The interval 1319-1358 (WHPKAEMRPSFTELVSRISAIFSTFIGEHYVHVNATYVNV) is interaction with MUC20. Tyr1348 and Tyr1355 each carry phosphotyrosine; by autocatalysis. Tyr1364 is subject to Phosphotyrosine.

The protein belongs to the protein kinase superfamily. Tyr protein kinase family. As to quaternary structure, heterodimer made of an alpha chain (50 kDa) and a beta chain (145 kDa) which are disulfide linked. Binds PLXNB1. Interacts when phosphorylated with downstream effectors including STAT3, PIK3R1, SRC, PCLG1, GRB2 and GAB1. Interacts with SPSB1, SPSB2 and SPSB4. Interacts with INPP5D/SHIP1. When phosphorylated at Tyr-1355, interacts with INPPL1/SHIP2. Interacts with RANBP9 and RANBP10, as well as SPSB1, SPSB2, SPSB3 and SPSB4. SPSB1 binding occurs in the presence and in the absence of HGF, however HGF treatment has a positive effect on this interaction. Interacts with MUC20; prevents interaction with GRB2 and suppresses hepatocyte growth factor-induced cell proliferation. Interacts with GRB10. Interacts with PTPN1 and PTPN2. Interacts with HSP90AA1 and HSP90AB1; the interaction suppresses MET kinase activity. Interacts with tensin TNS3. Interacts (when phosphorylated) with tensin TNS4 (via SH2 domain); the interaction increases MET protein stability by inhibiting MET endocytosis and subsequent lysosomal degradation. Autophosphorylated in response to ligand binding on Tyr-1233 and Tyr-1234 in the kinase domain leading to further phosphorylation of Tyr-1348 and Tyr-1355 in the C-terminal multifunctional docking site. Dephosphorylated by PTPRJ at Tyr-1348 and Tyr-1364. Dephosphorylated by PTPN1 and PTPN2. Post-translationally, ubiquitinated. Ubiquitination by CBL regulates the receptor stability and activity through proteasomal degradation. In terms of processing, O-mannosylation of IPT/TIG domains by TMEM260 is required for protein maturation. O-mannosylated residues are composed of single mannose glycans that are not elongated or modified.

Its subcellular location is the membrane. The enzyme catalyses L-tyrosyl-[protein] + ATP = O-phospho-L-tyrosyl-[protein] + ADP + H(+). In its inactive state, the C-terminal tail interacts with the catalytic domain and inhibits the kinase activity. Upon ligand binding, the C-terminal tail is displaced and becomes phosphorylated, thus increasing the kinase activity. Its function is as follows. Receptor tyrosine kinase that transduces signals from the extracellular matrix into the cytoplasm by binding to hepatocyte growth factor/HGF ligand. Regulates many physiological processes including proliferation, scattering, morphogenesis and survival. Ligand binding at the cell surface induces autophosphorylation of MET on its intracellular domain that provides docking sites for downstream signaling molecules. Following activation by ligand, interacts with the PI3-kinase subunit PIK3R1, PLCG1, SRC, GRB2, STAT3 or the adapter GAB1. Recruitment of these downstream effectors by MET leads to the activation of several signaling cascades including the RAS-ERK, PI3 kinase-AKT, or PLCgamma-PKC. The RAS-ERK activation is associated with the morphogenetic effects while PI3K/AKT coordinates prosurvival effects. During embryonic development, MET signaling plays a role in gastrulation, development and migration of muscles and neuronal precursors, angiogenesis and kidney formation. In adults, participates in wound healing as well as organ regeneration and tissue remodeling. Also promotes differentiation and proliferation of hematopoietic cells. This is Hepatocyte growth factor receptor (MET) from Echinops telfairi (Lesser hedgehog tenrec).